The sequence spans 220 residues: Protein-L-isoaspartate O-methyltransferase (220 aa).

The active site involves S64.

It belongs to the methyltransferase superfamily. L-isoaspartyl/D-aspartyl protein methyltransferase family.

It localises to the cytoplasm. The catalysed reaction is [protein]-L-isoaspartate + S-adenosyl-L-methionine = [protein]-L-isoaspartate alpha-methyl ester + S-adenosyl-L-homocysteine. In terms of biological role, catalyzes the methyl esterification of L-isoaspartyl residues in peptides and proteins that result from spontaneous decomposition of normal L-aspartyl and L-asparaginyl residues. It plays a role in the repair and/or degradation of damaged proteins. The chain is Protein-L-isoaspartate O-methyltransferase from Thermococcus onnurineus (strain NA1).